Here is a 187-residue protein sequence, read N- to C-terminus: MEEKMDSKRIENAFFEVIEALGDVEYKEELKDTPKRIADSYKEIFYGIDIDPKEVLTKTFEVNSNELIMEKNMDFYSMCEHHFLPFFGTVCIAYVPNKKIFGFGDILKLIEILSRRPQLQERLTEEIAKYIYEILNCQGVYVVVEAKHLCVTMRGQKKENTKILTTSAKGVFETDSNKKLEVLTLLK.

Residues cysteine 79, histidine 82, and cysteine 150 each coordinate Zn(2+).

The protein belongs to the GTP cyclohydrolase I family. In terms of assembly, toroid-shaped homodecamer, composed of two pentamers of five dimers.

It catalyses the reaction GTP + H2O = 7,8-dihydroneopterin 3'-triphosphate + formate + H(+). It participates in cofactor biosynthesis; 7,8-dihydroneopterin triphosphate biosynthesis; 7,8-dihydroneopterin triphosphate from GTP: step 1/1. The polypeptide is GTP cyclohydrolase 1 (Fusobacterium nucleatum subsp. nucleatum (strain ATCC 25586 / DSM 15643 / BCRC 10681 / CIP 101130 / JCM 8532 / KCTC 2640 / LMG 13131 / VPI 4355)).